The following is a 326-amino-acid chain: Protein TMED8 (326 aa).

A disordered region spans residues M1–A99. Low complexity predominate over residues S50 to P65. The region spanning P160–Y324 is the GOLD domain. K170 carries the post-translational modification N6-acetyllysine. The disordered stretch occupies residues V234–S268. Residues S239–E255 are compositionally biased toward acidic residues.

In Mus musculus (Mouse), this protein is Protein TMED8 (Tmed8).